The following is a 262-amino-acid chain: tRNA pseudouridine synthase A (262 aa).

Asp51 functions as the Nucleophile in the catalytic mechanism. Tyr109 contributes to the substrate binding site.

It belongs to the tRNA pseudouridine synthase TruA family. As to quaternary structure, homodimer.

The enzyme catalyses uridine(38/39/40) in tRNA = pseudouridine(38/39/40) in tRNA. In terms of biological role, formation of pseudouridine at positions 38, 39 and 40 in the anticodon stem and loop of transfer RNAs. In Legionella pneumophila (strain Paris), this protein is tRNA pseudouridine synthase A.